The following is a 449-amino-acid chain: Hyaluronidase-1 (449 aa).

A signal peptide spans M1–A23. 2 disulfide bridges follow: C47–C340 and C211–C227. N-linked (GlcNAc...) asparagine glycosylation is found at N67, N103, and N111. E135 functions as the Proton donor in the catalytic mechanism. N153 carries N-linked (GlcNAc...) asparagine glycosylation. Residue N357 is glycosylated (N-linked (GlcNAc...) asparagine). Cystine bridges form between C365–C376, C370–C427, and C429–C438. N-linked (GlcNAc...) asparagine glycosylation occurs at N401. The EGF-like domain occupies C427–C438.

The protein belongs to the glycosyl hydrolase 56 family. Monomer. As to expression, expressed by the venom gland.

It localises to the secreted. The enzyme catalyses Random hydrolysis of (1-&gt;4)-linkages between N-acetyl-beta-D-glucosamine and D-glucuronate residues in hyaluronate.. In terms of biological role, snake venom endo-hyaluronidase that degrades hyaluronan to smaller oligosaccharide fragments. In venom, it is not toxic by itself, but increases the diffusion of other venom proteins by degrading the extracellular matrix. In addition, it displays antiedematogenic activity. This chain is Hyaluronidase-1, found in Bitis arietans (African puff adder).